We begin with the raw amino-acid sequence, 363 residues long: MSKQTPLYEKHLEAGARMVDFGGWSMPLHYGSQIEEHHAVRRDAGMFDVSHMTVVDVQGNGARDYLRFLLANDVAKLKVPGKALYSCMLTPEGGVVDDLITYYLSDTFYRLVVNAATRDKDLAWMRDRATGFDVLLQERDDLAMVAVQGPHGRDKALSVLDGEIARVADALSPFVGGQAGDWFVGRTGYTGEDGFEIMLPAAEAPAFWDRLKVAGVQPAGLGARDTLRLEAGMNLYGQDMDEQVSPLESGLAWTVAFEPAERDFVGRAALEKQKAAGGLRRFVGLVLEGRGVLRGHMRVLCGAAGEGEITSGGFSPTLGVSIALARVPAGTGERVEVDVRGKPQPARLVKPPFVRNGQACVEI.

It belongs to the GcvT family. In terms of assembly, the glycine cleavage system is composed of four proteins: P, T, L and H.

The catalysed reaction is N(6)-[(R)-S(8)-aminomethyldihydrolipoyl]-L-lysyl-[protein] + (6S)-5,6,7,8-tetrahydrofolate = N(6)-[(R)-dihydrolipoyl]-L-lysyl-[protein] + (6R)-5,10-methylene-5,6,7,8-tetrahydrofolate + NH4(+). In terms of biological role, the glycine cleavage system catalyzes the degradation of glycine. The polypeptide is Aminomethyltransferase (Thioalkalivibrio sulfidiphilus (strain HL-EbGR7)).